A 207-amino-acid polypeptide reads, in one-letter code: Ribosome maturation factor RimM (207 aa).

Residues 130–207 form the PRC barrel domain; sequence EDEFYWVDLI…RIVVDWGLDY (78 aa).

This sequence belongs to the RimM family. Binds ribosomal protein uS19.

The protein resides in the cytoplasm. An accessory protein needed during the final step in the assembly of 30S ribosomal subunit, possibly for assembly of the head region. Essential for efficient processing of 16S rRNA. May be needed both before and after RbfA during the maturation of 16S rRNA. It has affinity for free ribosomal 30S subunits but not for 70S ribosomes. The sequence is that of Ribosome maturation factor RimM from Cupriavidus taiwanensis (strain DSM 17343 / BCRC 17206 / CCUG 44338 / CIP 107171 / LMG 19424 / R1) (Ralstonia taiwanensis (strain LMG 19424)).